Here is a 116-residue protein sequence, read N- to C-terminus: Photosystem II reaction center Psb28 protein (116 aa).

Belongs to the Psb28 family. Part of the photosystem II complex.

Its subcellular location is the plastid. The protein resides in the chloroplast thylakoid membrane. The chain is Photosystem II reaction center Psb28 protein from Guillardia theta (Cryptophyte).